A 461-amino-acid chain; its full sequence is Photosystem II CP43 reaction center protein (461 aa).

Positions 1–2 (ME) are excised as a propeptide. At Thr-3 the chain carries N-acetylthreonine. Thr-3 is modified (phosphothreonine). Transmembrane regions (helical) follow at residues 57–81 (LFEV…PHLA), 122–143 (LIGP…KDKN), 166–188 (KAMY…RVIT), 243–263 (KPWA…LSYS), and 279–300 (WFNN…ASQS). A [CaMn4O5] cluster-binding site is contributed by Glu-355. Residues 435–459 (RARAAAAGFEKGIDRDNEPVLSMKP) traverse the membrane as a helical segment.

Belongs to the PsbB/PsbC family. PsbC subfamily. In terms of assembly, PSII is composed of 1 copy each of membrane proteins PsbA, PsbB, PsbC, PsbD, PsbE, PsbF, PsbH, PsbI, PsbJ, PsbK, PsbL, PsbM, PsbT, PsbX, PsbY, PsbZ, Psb30/Ycf12, at least 3 peripheral proteins of the oxygen-evolving complex and a large number of cofactors. It forms dimeric complexes. It depends on Binds multiple chlorophylls and provides some of the ligands for the Ca-4Mn-5O cluster of the oxygen-evolving complex. It may also provide a ligand for a Cl- that is required for oxygen evolution. PSII binds additional chlorophylls, carotenoids and specific lipids. as a cofactor.

It is found in the plastid. Its subcellular location is the chloroplast thylakoid membrane. Functionally, one of the components of the core complex of photosystem II (PSII). It binds chlorophyll and helps catalyze the primary light-induced photochemical processes of PSII. PSII is a light-driven water:plastoquinone oxidoreductase, using light energy to abstract electrons from H(2)O, generating O(2) and a proton gradient subsequently used for ATP formation. This chain is Photosystem II CP43 reaction center protein, found in Tupiella akineta (Green alga).